The chain runs to 780 residues: LPS-assembly protein LptD (780 aa).

An N-terminal signal peptide occupies residues 1-24 (MKKRFPTLLATLIWTALYSQHTLA).

It belongs to the LptD family. As to quaternary structure, component of the lipopolysaccharide transport and assembly complex. Interacts with LptE and LptA.

It is found in the cell outer membrane. Functionally, together with LptE, is involved in the assembly of lipopolysaccharide (LPS) at the surface of the outer membrane. This chain is LPS-assembly protein LptD, found in Yersinia pseudotuberculosis serotype I (strain IP32953).